A 650-amino-acid chain; its full sequence is MICOS complex subunit MIC60, mitochondrial (650 aa).

A mitochondrion-targeting transit peptide spans 1 to 34 (MLRKSVLELSSRLSIKRFPRNLGAQRFHLSSSRN). The interval 26 to 74 (RFHLSSSRNASTSGKNGLPGAKPVGKPDASKVDPPKVTPPPPTKGNSSK) is disordered. The segment covering 28-40 (HLSSSRNASTSGK) has biased composition (polar residues). The Mitochondrial matrix segment spans residues 35–74 (ASTSGKNGLPGAKPVGKPDASKVDPPKVTPPPPTKGNSSK). A helical membrane pass occupies residues 75-95 (VVIGGVAIAGAFLVAYQTGYL). Residues 96–549 (DQYLGKEQQK…FDTLKGTLRH (454 aa)) lie on the Mitochondrial intermembrane side of the membrane. 3 disordered regions span residues 121–168 (EAHH…ESDL), 239–267 (QSSS…EDGI), and 284–304 (EGSD…TKET). Positions 284-299 (EGSDTESTGSSSIGEQ) are enriched in low complexity. 2 coiled-coil regions span residues 345–369 (AQVF…LRAR) and 396–430 (KAIQ…LAKA). A helical transmembrane segment spans residues 550-570 (FSLIPPGGGGILAHSLAHVAS). The Mitochondrial matrix portion of the chain corresponds to 571–650 (SLKFKEVDQA…QSYATCVSLT (80 aa)).

This sequence belongs to the MICOS complex subunit Mic60 family. In terms of assembly, component of the mitochondrial contact site and cristae organizing system (MICOS) complex. The MICOS complex associates with mitochondrial outer membrane proteins. Present in a large lipid-enriched complex called mitochondrial transmembrane lipoprotein (MTL) complex made of proteins located in the two mitochondrial membranes, including the TOM complex and the core components of the MICOS complex and containing at least digalactosyldiacylglycerol (DGDG). Binds to TOM40-1. Component of a mitochondrial large protein complex that contains, at least, MIC60, DGS1, TOM40, TOM20 proteins, and petC/RISP.

Its subcellular location is the mitochondrion inner membrane. Component of the MICOS complex, a large protein complex of the mitochondrial inner membrane that plays crucial roles in the maintenance of crista junctions, inner membrane architecture, and formation of contact sites to the outer membrane. Plays a role in keeping cristae membranes connected to the inner boundary membrane. Also promotes protein import via the mitochondrial intermembrane space assembly (MIA) pathway. Involved in the maintenance of mitochondria morphology. Binds to glycerolipids such as cardiolipin (CL). Contributes to the export of phosphatidylethanolamine (PE) from mitochondria and to the import of galactoglycerolipids from plastids during phosphate (Pi) starvation. Promotes lipid desorption from membranes, likely as an initial step for lipid transfer, and regulates probably the tethering between the inner and outer membranes of mitochondria by binding to TOM40 proteins. This Arabidopsis thaliana (Mouse-ear cress) protein is MICOS complex subunit MIC60, mitochondrial.